The following is an 81-amino-acid chain: Metallocarboxypeptidase inhibitor (81 aa).

A signal peptide spans 1-15 (MFLLVFLCCLHLVIS). 4 cysteine pairs are disulfide-bonded: Cys-25/Cys-48, Cys-32/Cys-76, Cys-33/Cys-57, and Cys-36/Cys-72.

In terms of biological role, tightly binding, competitive inhibitor of different types of pancreatic-like carboxypeptidases. Inhibits human CPA4. This is Metallocarboxypeptidase inhibitor from Hirudo medicinalis (Medicinal leech).